Consider the following 146-residue polypeptide: Small ribosomal subunit protein uS9 (146 aa).

It belongs to the universal ribosomal protein uS9 family. As to quaternary structure, component of the small ribosomal subunit.

The protein localises to the cytoplasm. In terms of biological role, component of the small ribosomal subunit. The ribosome is a large ribonucleoprotein complex responsible for the synthesis of proteins in the cell. The sequence is that of Small ribosomal subunit protein uS9 (rps16) from Ictalurus punctatus (Channel catfish).